The chain runs to 155 residues: Ribonuclease H (155 aa).

The region spanning 4 to 145 (NISKVVIYTD…ADKLAAQGRQ (142 aa)) is the RNase H type-1 domain. Mg(2+) is bound by residues Asp-13, Glu-51, Asp-73, and Asp-137.

The protein belongs to the RNase H family. Monomer. It depends on Mg(2+) as a cofactor.

Its subcellular location is the cytoplasm. The enzyme catalyses Endonucleolytic cleavage to 5'-phosphomonoester.. Functionally, endonuclease that specifically degrades the RNA of RNA-DNA hybrids. The polypeptide is Ribonuclease H (Rickettsia canadensis (strain McKiel)).